A 257-amino-acid chain; its full sequence is Reticulon-like protein B4 (257 aa).

The tract at residues 19–42 is disordered; the sequence is IHGHGDSSSLSDSDDDKKSTSSSS. The 190-residue stretch at 68-257 folds into the Reticulon domain; sequence PADIFLWRNK…PRGALNKKKD (190 aa). Transmembrane regions (helical) follow at residues 78–98, 99–119, and 173–193; these read KVSG…ELFE, YHLL…LFLW, and FILV…YNFL.

As to quaternary structure, interacts with VirB2.

The protein resides in the endoplasmic reticulum membrane. In terms of biological role, plays a role in the Agrobacterium-mediated plant transformation via its interaction with VirB2, the major component of the T-pilus. This is Reticulon-like protein B4 (RTNLB4) from Arabidopsis thaliana (Mouse-ear cress).